The following is a 181-amino-acid chain: ATP synthase subunit delta (181 aa).

This sequence belongs to the ATPase delta chain family. In terms of assembly, F-type ATPases have 2 components, F(1) - the catalytic core - and F(0) - the membrane proton channel. F(1) has five subunits: alpha(3), beta(3), gamma(1), delta(1), epsilon(1). F(0) has three main subunits: a(1), b(2) and c(10-14). The alpha and beta chains form an alternating ring which encloses part of the gamma chain. F(1) is attached to F(0) by a central stalk formed by the gamma and epsilon chains, while a peripheral stalk is formed by the delta and b chains.

It localises to the cell membrane. In terms of biological role, f(1)F(0) ATP synthase produces ATP from ADP in the presence of a proton or sodium gradient. F-type ATPases consist of two structural domains, F(1) containing the extramembraneous catalytic core and F(0) containing the membrane proton channel, linked together by a central stalk and a peripheral stalk. During catalysis, ATP synthesis in the catalytic domain of F(1) is coupled via a rotary mechanism of the central stalk subunits to proton translocation. This protein is part of the stalk that links CF(0) to CF(1). It either transmits conformational changes from CF(0) to CF(1) or is implicated in proton conduction. This Mycoplasma capricolum subsp. capricolum (strain California kid / ATCC 27343 / NCTC 10154) protein is ATP synthase subunit delta.